Reading from the N-terminus, the 490-residue chain is Probable cytosol aminopeptidase (490 aa).

Residues lysine 256 and aspartate 261 each contribute to the Mn(2+) site. Residue lysine 268 is part of the active site. Residues aspartate 280, aspartate 340, and glutamate 342 each coordinate Mn(2+). Residue arginine 344 is part of the active site.

It belongs to the peptidase M17 family. It depends on Mn(2+) as a cofactor.

It is found in the cytoplasm. It catalyses the reaction Release of an N-terminal amino acid, Xaa-|-Yaa-, in which Xaa is preferably Leu, but may be other amino acids including Pro although not Arg or Lys, and Yaa may be Pro. Amino acid amides and methyl esters are also readily hydrolyzed, but rates on arylamides are exceedingly low.. It carries out the reaction Release of an N-terminal amino acid, preferentially leucine, but not glutamic or aspartic acids.. Presumably involved in the processing and regular turnover of intracellular proteins. Catalyzes the removal of unsubstituted N-terminal amino acids from various peptides. This Synechococcus sp. (strain CC9902) protein is Probable cytosol aminopeptidase.